Reading from the N-terminus, the 321-residue chain is Glucokinase (321 aa).

ATP is bound at residue 8–13 (ADIGGT).

Belongs to the bacterial glucokinase family.

Its subcellular location is the cytoplasm. It catalyses the reaction D-glucose + ATP = D-glucose 6-phosphate + ADP + H(+). The sequence is that of Glucokinase from Paramagnetospirillum magneticum (strain ATCC 700264 / AMB-1) (Magnetospirillum magneticum).